We begin with the raw amino-acid sequence, 99 residues long: Defensin-A4 (99 aa).

The signal sequence occupies residues 1-21 (MKTLCLLFAVLCLVTWTQARG). Residues 22–68 (AEVEENLTAQDGEVDIAGDNGDVQLTLNTDDFESFTLKTLTLGHPRV) constitute a propeptide that is removed on maturation. Disulfide bonds link cysteine 73-cysteine 97, cysteine 75-cysteine 89, and cysteine 79-cysteine 96.

It belongs to the alpha-defensin family. In terms of tissue distribution, lowly expressed in spleen, and expressed at lower levels in kidney and lung.

Its subcellular location is the secreted. Its function is as follows. Has antimicrobial activity. This is Defensin-A4 from Ornithorhynchus anatinus (Duckbill platypus).